The chain runs to 138 residues: Nucleoside diphosphate kinase (138 aa).

ATP is bound by residues Lys-9, Phe-57, Arg-85, Thr-91, Arg-102, and Asn-112. The active-site Pros-phosphohistidine intermediate is His-115.

The protein belongs to the NDK family. As to quaternary structure, homotetramer. Mg(2+) serves as cofactor.

The protein localises to the cytoplasm. It catalyses the reaction a 2'-deoxyribonucleoside 5'-diphosphate + ATP = a 2'-deoxyribonucleoside 5'-triphosphate + ADP. The catalysed reaction is a ribonucleoside 5'-diphosphate + ATP = a ribonucleoside 5'-triphosphate + ADP. In terms of biological role, major role in the synthesis of nucleoside triphosphates other than ATP. The ATP gamma phosphate is transferred to the NDP beta phosphate via a ping-pong mechanism, using a phosphorylated active-site intermediate. This Desulfatibacillum aliphaticivorans protein is Nucleoside diphosphate kinase.